We begin with the raw amino-acid sequence, 100 residues long: Urease subunit gamma (100 aa).

This sequence belongs to the urease gamma subunit family. In terms of assembly, heterotrimer of UreA (gamma), UreB (beta) and UreC (alpha) subunits. Three heterotrimers associate to form the active enzyme.

The protein resides in the cytoplasm. The catalysed reaction is urea + 2 H2O + H(+) = hydrogencarbonate + 2 NH4(+). It participates in nitrogen metabolism; urea degradation; CO(2) and NH(3) from urea (urease route): step 1/1. In Synechococcus sp. (strain WH7805), this protein is Urease subunit gamma.